The following is a 182-amino-acid chain: Putative manganese efflux pump MntP (182 aa).

6 helical membrane passes run 6-26, 37-57, 71-91, 101-121, 131-151, and 162-182; these read LIPLIIMAFALGMDAFSVSLG, ILYIGVTIGIFHIIMPFIGMV, HFAGAILLIGLGFYIVYSSIL, IGISLFVFAFGVSIDSFSVGL, VITILLFGFISMLLAWTGLFI, and YGEIVGGIILVGFGLYLLFPI.

The protein belongs to the MntP (TC 9.B.29) family.

The protein localises to the cell membrane. In terms of biological role, probably functions as a manganese efflux pump. This Bacillus cereus (strain AH187) protein is Putative manganese efflux pump MntP.